Here is a 286-residue protein sequence, read N- to C-terminus: tRNA(Ile)-lysidine synthase (286 aa).

Position 7-12 (7-12 (SGGPDS)) interacts with ATP.

Belongs to the tRNA(Ile)-lysidine synthase family.

Its subcellular location is the cytoplasm. The catalysed reaction is cytidine(34) in tRNA(Ile2) + L-lysine + ATP = lysidine(34) in tRNA(Ile2) + AMP + diphosphate + H(+). Ligates lysine onto the cytidine present at position 34 of the AUA codon-specific tRNA(Ile) that contains the anticodon CAU, in an ATP-dependent manner. Cytidine is converted to lysidine, thus changing the amino acid specificity of the tRNA from methionine to isoleucine. This Mycoplasmopsis pulmonis (strain UAB CTIP) (Mycoplasma pulmonis) protein is tRNA(Ile)-lysidine synthase.